We begin with the raw amino-acid sequence, 428 residues long: Immunoglobulin superfamily containing leucine-rich repeat protein (428 aa).

Positions 1–18 (MQELRLLCLVVLVGLAQA) are cleaved as a signal peptide. The LRRNT domain occupies 19 to 50 (CPEPCECGEKYGFHIADCAYRDLQAVPSGFPA). Asn-51 is a glycosylation site (N-linked (GlcNAc...) asparagine). LRR repeat units lie at residues 51 to 72 (NVTTLSLSANQLPSLPGGAFRE), 75 to 96 (RLQSLWLAHNEIRSVAAGALAS), 99 to 122 (QLKSLDLSHNLISDFAWSDLHSLS), 123 to 144 (ALQLLKMDSNELTFIPRDAFRS), and 147 to 168 (ALRSLQLNHNRLHTLAEGTFAP). Positions 180-231 (NPFDCTCGIVWFKTWALTTAVSIPEQDNITCTSPHVLKGTRLNRLLPLPCSA) constitute an LRRCT domain. In terms of domain architecture, Ig-like spans 232 to 343 (PSVQLTYQPS…GSAESSVNVA (112 aa)). Cys-257 and Cys-327 are disulfide-bonded. Asn-309 carries N-linked (GlcNAc...) asparagine glycosylation.

It is found in the secreted. The sequence is that of Immunoglobulin superfamily containing leucine-rich repeat protein (ISLR) from Bos taurus (Bovine).